A 955-amino-acid polypeptide reads, in one-letter code: B3 domain-containing protein Os07g0563300 (955 aa).

Composition is skewed to pro residues over residues 1–20 (MSSPAQPPPTRPPVAAPPPS) and 29–45 (VQPPPLQPKPPPHPQQP). Disordered stretches follow at residues 1-81 (MSSP…QRPR) and 325-392 (ARKG…SSSL). The segment covering 62 to 71 (QHQQQQQGPP) has biased composition (low complexity). Positions 332-342 (DPCSSVSTTFK) are enriched in polar residues. Positions 343–355 (LDSHHPSILKDDP) are enriched in basic and acidic residues. Over residues 382-392 (QQQQQMASSSL) the composition is skewed to low complexity. Positions 453–554 (FEKMLSASDA…KLVMGFRKAT (102 aa)) form a DNA-binding region, TF-B3. Polar residues-rich tracts occupy residues 556 to 565 (LSAEQDQPTK) and 598 to 608 (NTESKSSSPVE). A disordered region spans residues 556-642 (LSAEQDQPTK…PLPVKRKATS (87 aa)). A CW-type zinc finger spans residues 708 to 758 (SGENHQWAQCEDCSKWRKLPVDALLPSKWTCSDNKWDSERSSCDSAQEINM). Zn(2+)-binding residues include Cys717, Cys720, Cys738, and Cys750. The tract at residues 856-955 (MMRREKRQQS…ATRLLRDNPT (100 aa)) is disordered. Residues 862–877 (RQQSEKDSGVPRKREP) are compositionally biased toward basic and acidic residues. Polar residues-rich tracts occupy residues 878 to 900 (GQSSEPVPQSGSGAHPTSTSSPH) and 920 to 933 (TSSPVKNQIDLNSQ). Basic and acidic residues predominate over residues 939-955 (EQSPKSDATRLLRDNPT).

Its subcellular location is the nucleus. In Oryza sativa subsp. japonica (Rice), this protein is B3 domain-containing protein Os07g0563300.